Consider the following 1405-residue polypeptide: DNA-directed RNA polymerase subunit beta' (1405 aa).

Zn(2+) is bound by residues Cys70, Cys72, Cys85, and Cys88. Residues Asp460, Asp462, and Asp464 each contribute to the Mg(2+) site. The Zn(2+) site is built by Cys814, Cys888, Cys895, and Cys898.

It belongs to the RNA polymerase beta' chain family. As to quaternary structure, the RNAP catalytic core consists of 2 alpha, 1 beta, 1 beta' and 1 omega subunit. When a sigma factor is associated with the core the holoenzyme is formed, which can initiate transcription. Requires Mg(2+) as cofactor. The cofactor is Zn(2+).

The enzyme catalyses RNA(n) + a ribonucleoside 5'-triphosphate = RNA(n+1) + diphosphate. Its function is as follows. DNA-dependent RNA polymerase catalyzes the transcription of DNA into RNA using the four ribonucleoside triphosphates as substrates. The sequence is that of DNA-directed RNA polymerase subunit beta' from Shewanella oneidensis (strain ATCC 700550 / JCM 31522 / CIP 106686 / LMG 19005 / NCIMB 14063 / MR-1).